A 123-amino-acid chain; its full sequence is Large ribosomal subunit protein bL17 (123 aa).

It belongs to the bacterial ribosomal protein bL17 family. As to quaternary structure, part of the 50S ribosomal subunit. Contacts protein L32.

This Exiguobacterium sibiricum (strain DSM 17290 / CCUG 55495 / CIP 109462 / JCM 13490 / 255-15) protein is Large ribosomal subunit protein bL17.